A 178-amino-acid polypeptide reads, in one-letter code: Large ribosomal subunit protein bL17 (178 aa).

The tract at residues 150–178 (PADEPVVAEENAPQSAVKDAVDECEGKAD) is disordered. Basic and acidic residues predominate over residues 168–178 (DAVDECEGKAD).

Belongs to the bacterial ribosomal protein bL17 family. In terms of assembly, part of the 50S ribosomal subunit. Contacts protein L32.

This chain is Large ribosomal subunit protein bL17, found in Geobacter metallireducens (strain ATCC 53774 / DSM 7210 / GS-15).